The following is a 605-amino-acid chain: Elongation factor 4 (605 aa).

Residues 5-187 enclose the tr-type G domain; sequence ALIRNFSIIA…AVVERIPPPK (183 aa). GTP is bound by residues 17–22 and 134–137; these read DHGKST and NKID.

Belongs to the TRAFAC class translation factor GTPase superfamily. Classic translation factor GTPase family. LepA subfamily.

The protein localises to the cell inner membrane. It catalyses the reaction GTP + H2O = GDP + phosphate + H(+). Functionally, required for accurate and efficient protein synthesis under certain stress conditions. May act as a fidelity factor of the translation reaction, by catalyzing a one-codon backward translocation of tRNAs on improperly translocated ribosomes. Back-translocation proceeds from a post-translocation (POST) complex to a pre-translocation (PRE) complex, thus giving elongation factor G a second chance to translocate the tRNAs correctly. Binds to ribosomes in a GTP-dependent manner. The polypeptide is Elongation factor 4 (Novosphingobium aromaticivorans (strain ATCC 700278 / DSM 12444 / CCUG 56034 / CIP 105152 / NBRC 16084 / F199)).